The chain runs to 533 residues: Trigger factor (533 aa).

Positions 164–249 constitute a PPIase FKBP-type domain; that stretch reads GDQLIIDFTG…VKQVKVETDT (86 aa). A disordered region spans residues 436-533; sequence EAAIEAEAEE…APAKKPAAKK (98 aa). Residues 465–477 are compositionally biased toward basic residues; the sequence is AAAKKAPAKKAPA. Positions 481–490 are enriched in basic and acidic residues; sequence AAKDGDEKPA. 2 stretches are compositionally biased toward basic residues: residues 494–506 and 515–533; these read APAK…KAST and PAKK…AAKK.

It belongs to the FKBP-type PPIase family. Tig subfamily.

Its subcellular location is the cytoplasm. The catalysed reaction is [protein]-peptidylproline (omega=180) = [protein]-peptidylproline (omega=0). In terms of biological role, involved in protein export. Acts as a chaperone by maintaining the newly synthesized protein in an open conformation. Functions as a peptidyl-prolyl cis-trans isomerase. This chain is Trigger factor, found in Erythrobacter litoralis (strain HTCC2594).